A 121-amino-acid polypeptide reads, in one-letter code: Immunoglobulin heavy variable 6-1 (121 aa).

Residues 1 to 20 form the signal peptide; that stretch reads MSVSFLIFLPVLGLPWGVLS. The tract at residues 21–45 is framework-1; that stretch reads QVQLQQSGPGLVKPSQTLSLTCAIS. The 101-residue stretch at 21–121 folds into the Ig-like domain; it reads QVQLQQSGPG…EDTAVYYCAR (101 aa). The cysteines at positions 42 and 119 are disulfide-linked. The interval 46-55 is complementarity-determining-1; sequence GDSVSSNSAA. Residues 56 to 72 form a framework-2 region; sequence WNWIRQSPSRGLEWLGR. Residues 73–81 form a complementarity-determining-2 region; the sequence is TYYRSKWYN. The segment at 82–119 is framework-3; sequence DYAVSVKSRITINPDTSKNQFSLQLNSVTPEDTAVYYC. A complementarity-determining-3 region spans residues 120–121; sequence AR.

In terms of assembly, immunoglobulins are composed of two identical heavy chains and two identical light chains; disulfide-linked.

It is found in the secreted. It localises to the cell membrane. In terms of biological role, v region of the variable domain of immunoglobulin heavy chains that participates in the antigen recognition. Immunoglobulins, also known as antibodies, are membrane-bound or secreted glycoproteins produced by B lymphocytes. In the recognition phase of humoral immunity, the membrane-bound immunoglobulins serve as receptors which, upon binding of a specific antigen, trigger the clonal expansion and differentiation of B lymphocytes into immunoglobulins-secreting plasma cells. Secreted immunoglobulins mediate the effector phase of humoral immunity, which results in the elimination of bound antigens. The antigen binding site is formed by the variable domain of one heavy chain, together with that of its associated light chain. Thus, each immunoglobulin has two antigen binding sites with remarkable affinity for a particular antigen. The variable domains are assembled by a process called V-(D)-J rearrangement and can then be subjected to somatic hypermutations which, after exposure to antigen and selection, allow affinity maturation for a particular antigen. The chain is Immunoglobulin heavy variable 6-1 from Homo sapiens (Human).